The primary structure comprises 353 residues: Phospho-N-acetylmuramoyl-pentapeptide-transferase (353 aa).

The next 10 membrane-spanning stretches (helical) occupy residues 22 to 42 (FAFF…ITWA), 65 to 85 (TPTM…LSCI), 88 to 108 (DNIF…IGLI), 129 to 149 (LLTQ…SSEL), 161 to 181 (PLFD…ISSS), 192 to 212 (GLAT…LYLS), 228 to 248 (GLGE…GFLW), 256 to 276 (VFMG…LAII), 281 to 301 (ILLL…ILQV), and 330 to 350 (KIIV…LASI).

This sequence belongs to the glycosyltransferase 4 family. MraY subfamily. Requires Mg(2+) as cofactor.

The protein localises to the cell inner membrane. It carries out the reaction UDP-N-acetyl-alpha-D-muramoyl-L-alanyl-gamma-D-glutamyl-meso-2,6-diaminopimeloyl-D-alanyl-D-alanine + di-trans,octa-cis-undecaprenyl phosphate = di-trans,octa-cis-undecaprenyl diphospho-N-acetyl-alpha-D-muramoyl-L-alanyl-D-glutamyl-meso-2,6-diaminopimeloyl-D-alanyl-D-alanine + UMP. The protein operates within cell wall biogenesis; peptidoglycan biosynthesis. In terms of biological role, catalyzes the initial step of the lipid cycle reactions in the biosynthesis of the cell wall peptidoglycan: transfers peptidoglycan precursor phospho-MurNAc-pentapeptide from UDP-MurNAc-pentapeptide onto the lipid carrier undecaprenyl phosphate, yielding undecaprenyl-pyrophosphoryl-MurNAc-pentapeptide, known as lipid I. The polypeptide is Phospho-N-acetylmuramoyl-pentapeptide-transferase (Campylobacter jejuni subsp. jejuni serotype O:23/36 (strain 81-176)).